Here is a 1036-residue protein sequence, read N- to C-terminus: Protein P200 (1036 aa).

Positions 697–727 (ETSELNTESDPSFEPEVEIQPEPEPNFDLET) are disordered. A compositionally biased stretch (acidic residues) spans 707–727 (PSFEPEVEIQPEPEPNFDLET). 3 tandem repeats follow at residues 718-723 (EPEPNF), 738-743 (EPEPNF), and 776-781 (EPEPNF). The segment at 718 to 781 (EPEPNFDLET…SFESEPEPNF (64 aa)) is 3 X 6 AA repeats of E-P-E-P-N-F. Disordered stretches follow at residues 757–784 (FESETEVQQELAQESSFESEPEPNFETE) and 798–845 (EAEV…ETEA). The segment covering 773 to 784 (FESEPEPNFETE) has biased composition (acidic residues).

The protein localises to the cell projection. Its subcellular location is the attachment organelle. Functionally, protein cytoskeleton-associated which plays a role in gliding motility and perhaps also in mucociliary clearance. This Mycoplasma pneumoniae (strain ATCC 29342 / M129 / Subtype 1) (Mycoplasmoides pneumoniae) protein is Protein P200 (p200).